The primary structure comprises 130 residues: Small ribosomal subunit protein uS8 (130 aa).

This sequence belongs to the universal ribosomal protein uS8 family. In terms of assembly, part of the 30S ribosomal subunit.

Its function is as follows. One of the primary rRNA binding proteins, it binds directly to 16S rRNA central domain where it helps coordinate assembly of the platform of the 30S subunit. This is Small ribosomal subunit protein uS8 from Methanococcus maripaludis (strain C7 / ATCC BAA-1331).